The following is a 138-amino-acid chain: ATP synthase epsilon chain (138 aa).

This sequence belongs to the ATPase epsilon chain family. As to quaternary structure, F-type ATPases have 2 components, CF(1) - the catalytic core - and CF(0) - the membrane proton channel. CF(1) has five subunits: alpha(3), beta(3), gamma(1), delta(1), epsilon(1). CF(0) has three main subunits: a, b and c.

It localises to the cell membrane. In terms of biological role, produces ATP from ADP in the presence of a proton gradient across the membrane. This Buchnera aphidicola subsp. Acyrthosiphon pisum (strain APS) (Acyrthosiphon pisum symbiotic bacterium) protein is ATP synthase epsilon chain (atpC).